Consider the following 80-residue polypeptide: MKTGLKRVKLHVKKNDMVVVLSGNDRGKSGKVLRVYPVKNRVIIEGVNIRKRHMRPTQSNPQGSIIEREFPIHASNVKKS.

Residues 53–80 (HMRPTQSNPQGSIIEREFPIHASNVKKS) form a disordered region.

It belongs to the universal ribosomal protein uL24 family. As to quaternary structure, part of the 50S ribosomal subunit.

Functionally, one of two assembly initiator proteins, it binds directly to the 5'-end of the 23S rRNA, where it nucleates assembly of the 50S subunit. One of the proteins that surrounds the polypeptide exit tunnel on the outside of the subunit. The polypeptide is Large ribosomal subunit protein uL24 (Chlorobium luteolum (strain DSM 273 / BCRC 81028 / 2530) (Pelodictyon luteolum)).